Here is a 184-residue protein sequence, read N- to C-terminus: Adenine phosphoribosyltransferase (184 aa).

Belongs to the purine/pyrimidine phosphoribosyltransferase family. As to quaternary structure, homodimer.

It localises to the cytoplasm. The enzyme catalyses AMP + diphosphate = 5-phospho-alpha-D-ribose 1-diphosphate + adenine. It functions in the pathway purine metabolism; AMP biosynthesis via salvage pathway; AMP from adenine: step 1/1. Catalyzes a salvage reaction resulting in the formation of AMP, that is energically less costly than de novo synthesis. In Acidovorax sp. (strain JS42), this protein is Adenine phosphoribosyltransferase.